The following is a 377-amino-acid chain: Protein-glutamate methylesterase/protein-glutamine glutaminase 1 (377 aa).

A Response regulatory domain is found at 4-121; sequence KVLVVDDSSF…ARNRDEAVTL (118 aa). Asp-55 carries the post-translational modification 4-aspartylphosphate. The segment at 138–170 is disordered; that stretch reads RPAAPRPAPTTSIAASSSLSQERAAATSPLGNR. A compositionally biased stretch (low complexity) spans 146-157; it reads PTTSIAASSSLS. One can recognise a CheB-type methylesterase domain in the interval 184–377; the sequence is SGKKYQLTAI…ERMLVEVGLA (194 aa). Active-site residues include Ser-196, His-223, and Asp-319.

The protein belongs to the CheB family. Post-translationally, phosphorylated by CheA. Phosphorylation of the N-terminal regulatory domain activates the methylesterase activity.

Its subcellular location is the cytoplasm. It catalyses the reaction [protein]-L-glutamate 5-O-methyl ester + H2O = L-glutamyl-[protein] + methanol + H(+). It carries out the reaction L-glutaminyl-[protein] + H2O = L-glutamyl-[protein] + NH4(+). Its function is as follows. Involved in chemotaxis. Part of a chemotaxis signal transduction system that modulates chemotaxis in response to various stimuli. Catalyzes the demethylation of specific methylglutamate residues introduced into the chemoreceptors (methyl-accepting chemotaxis proteins or MCP) by CheR. Also mediates the irreversible deamidation of specific glutamine residues to glutamic acid. The sequence is that of Protein-glutamate methylesterase/protein-glutamine glutaminase 1 from Vibrio cholerae serotype O1 (strain ATCC 39315 / El Tor Inaba N16961).